The following is an 848-amino-acid chain: Protein NETWORKED 2C (848 aa).

Positions 10-90 (YSWWWASHVR…ERYDHISKEL (81 aa)) constitute an NAB domain. The tract at residues 108-141 (FAMNEDDDDDAPVSPRHHKNKTSNKNVPKVPDLP) is disordered. Coiled-coil stretches lie at residues 172-204 (LSKT…SYEN), 241-278 (EAQI…SRKQ), 305-454 (SEKE…KATN), and 752-797 (AKFE…SEEF).

This sequence belongs to the NET family.

Plant-specific actin binding protein. May be part of a membrane-cytoskeletal adapter complex. The sequence is that of Protein NETWORKED 2C from Arabidopsis thaliana (Mouse-ear cress).